Here is a 134-residue protein sequence, read N- to C-terminus: uncharacterized protein (134 aa).

The next 2 membrane-spanning stretches (helical) occupy residues 16–36 (IFSFVFDIFLFIFDVIWNTKL) and 43–63 (IAYFLIFFMVIKLSIYAIHGT).

This sequence belongs to the plectrovirus ORF5 family.

Its subcellular location is the host membrane. This is an uncharacterized protein from Spiroplasma citri (SpV1).